The primary structure comprises 427 residues: Serine protease HTRA2, mitochondrial (427 aa).

Residues 33–55 are disordered; that stretch reads HTASSSKGSGGDNSKDKENNGQN. The helical transmembrane segment at 66–86 threads the bilayer; that stretch reads SAFQFCVPFSLGALVSAVLIE. Residues 78–81 carry the IAP-binding motif; that stretch reads ALVS. Residues 144 to 307 form a serine protease region; that stretch reads SNGSGFVIEQ…IPIDYVKVFL (164 aa). Active-site charge relay system residues include histidine 162, aspartate 194, and serine 271. The PDZ domain occupies 330 to 415; the sequence is MGITMLTLTP…DLEIVILRGV (86 aa).

It belongs to the peptidase S1C family. In terms of assembly, interacts with th/DIAP1 (via BIR 2 domain).

The protein localises to the mitochondrion intermembrane space. Its subcellular location is the mitochondrion membrane. It carries out the reaction Cleavage of non-polar aliphatic amino-acids at the P1 position, with a preference for Val, Ile and Met. At the P2 and P3 positions, Arg is selected most strongly with a secondary preference for other hydrophilic residues.. Functionally, serine protease that shows proteolytic activity against a non-specific substrate beta-casein. Promotes or induces cell death either by direct binding to and inhibition of BIRC proteins (also called inhibitor of apoptosis proteins, IAPs), leading to an increase in caspase activity, or by a BIRC inhibition-independent, caspase-independent and serine protease activity-dependent mechanism. Can antagonize antiapoptotic activity of th/Diap1 by directly inducing the degradation of th/Diap1. The sequence is that of Serine protease HTRA2, mitochondrial from Drosophila pseudoobscura pseudoobscura (Fruit fly).